Here is a 685-residue protein sequence, read N- to C-terminus: N(6)-adenosine-methyltransferase MT-A70-like (685 aa).

S-adenosyl-L-methionine contacts are provided by residues 464–465 and D482; that span reads DI. Residues 552-565 form a positively charged region required for RNA-binding region; sequence RIIRTGRTGHWLNH. Residues K599, 622–625, and 635–636 each bind S-adenosyl-L-methionine; these read RMHN and NQ. The interval 657-685 is disordered; the sequence is EIDVQPPSPPRASAMETDNEPMAIDSITA. Residue S664 is modified to Phosphoserine.

This sequence belongs to the MT-A70-like family. In terms of assembly, interacts with FIP37. Interacts with MTB. Associates with MTB, FIP37, VIR and HAKAI to form the m6A writer complex which is essential for adenosine methylation at specific mRNA sequences.

The protein localises to the nucleus. It catalyses the reaction an adenosine in mRNA + S-adenosyl-L-methionine = an N(6)-methyladenosine in mRNA + S-adenosyl-L-homocysteine + H(+). Functionally, catalytic subunit of the N6-methyltransferase complex, a multiprotein complex that mediates N6-methyladenosine (m6A) methylation at the 5'-[AG]GAC-3' consensus sites of some mRNAs. Associates with MTB, FIP37, VIR and HAKAI to form the m6A writer complex which is essential for adenosine methylation at specific mRNA sequences. N6-methyladenosine (m6A) plays a role in mRNA stability, processing, translation efficiency and editing. This Arabidopsis thaliana (Mouse-ear cress) protein is N(6)-adenosine-methyltransferase MT-A70-like.